The chain runs to 233 residues: Inner kinetochore subunit fta4 (233 aa).

Phosphothreonine is present on residues T189 and T191.

Belongs to the NKP1 family. Component of the inner kinetochore constitutive centromere-associated network (CCAN) (also known as central kinetochore Sim4 complex in fission yeast), which is composed of at least cnl2, cnp3, cnp20, fta1, fta2, fta3, fta4, fta6, fta7, mal2, mhf1, mhf2, mis6, mis15, mis17, sim4 and wip1.

Its subcellular location is the nucleus. The protein localises to the chromosome. It is found in the centromere. It localises to the kinetochore. Component of the kinetochore, a multiprotein complex that assembles on centromeric DNA and attaches chromosomes to spindle microtubules, mediating chromosome segregation and sister chromatid segregation during meiosis and mitosis. Component of the inner kinetochore constitutive centromere-associated network (CCAN), which serves as a structural platform for outer kinetochore assembly. Fta2, fta3 and fta4 associate with the central core (cnt) and inner repeat (inr) region of the centromere. This is Inner kinetochore subunit fta4 (fta4) from Schizosaccharomyces pombe (strain 972 / ATCC 24843) (Fission yeast).